Consider the following 603-residue polypeptide: Leucine-rich repeat-containing protein 40 (603 aa).

The disordered stretch occupies residues 1 to 27; sequence MAAARRARAGDPRAGFRRAAEEQSPAV. LRR repeat units lie at residues 83 to 104, 106 to 127, 129 to 150, 152 to 173, 175 to 196, 198 to 219, 221 to 242, 244 to 265, 266 to 286, 290 to 311, 313 to 335, 336 to 357, 401 to 422, 427 to 449, 451 to 473, 474 to 495, 497 to 518, 520 to 541, 544 to 565, and 567 to 588; these read DLTKLILASNQLRCLSEDVRLL, ALTVLDVHDNQLTSLPSALGQL, NLQKLDVSHNKLKSIPEELLQL, HLKGLLLQHNELSHLPDGFGQL, SLEELDLSNNHLTDIPKSFALL, NLVRLNLACNQLKDLPADISAM, SLRQLDCTKNYLESVPSELASM, SLEQLYLRKNKLRSLPELPSCK, LLKELHAGENQIEILNAENLK, SLSVLELRDNKIKSVPDEITLL, KLERLDLANNDISRLPYTLGNLS, QLKFLALEGNPLRTIRRDLLQK, TLKLLDYSEKQVAVIPDDVFSA, PVTSVNFSKNQLTAIPPRIVELK, SVCDVNFGFNKISSVSLELCTLH, KLTHLDIRNNVLTSLPEEMEAL, RLQVINLSFNRFKVFPSVLYRM, ALETILLSNNQVGSIDPLQLKK, QLGTLDLQNNDLLQVPPELGNC, and TLRTLLLEGNPFRTPRAAILAK.

This is Leucine-rich repeat-containing protein 40 (LRRC40) from Gallus gallus (Chicken).